We begin with the raw amino-acid sequence, 161 residues long: Regulator of ribonuclease activity A (161 aa).

This sequence belongs to the RraA family. In terms of assembly, homotrimer. Binds to both RNA-binding sites in the C-terminal region of Rne and to RhlB.

The protein localises to the cytoplasm. Globally modulates RNA abundance by binding to RNase E (Rne) and regulating its endonucleolytic activity. Can modulate Rne action in a substrate-dependent manner by altering the composition of the degradosome. Modulates RNA-binding and helicase activities of the degradosome. The protein is Regulator of ribonuclease activity A of Alteromonas mediterranea (strain DSM 17117 / CIP 110805 / LMG 28347 / Deep ecotype).